Consider the following 261-residue polypeptide: Calcium-binding protein 8 (261 aa).

The interval 1 to 41 is disordered; that stretch reads MRLPEQPGDGKPENETKGDQETPERGEEPRRSPAPDFPTWE. The Cytoplasmic segment spans residues 1–234; the sequence is MRLPEQPGDG…QNRQTCVRKS (234 aa). A compositionally biased stretch (basic and acidic residues) spans 8–33; the sequence is GDGKPENETKGDQETPERGEEPRRSP. 2 consecutive EF-hand domains span residues 78 to 113 and 114 to 149; these read EELD…LGYM and PSEV…KLVS. Ca(2+) is bound by residues aspartate 91, aspartate 93, asparagine 95, glutamate 102, aspartate 127, aspartate 129, aspartate 131, glutamine 133, and glutamate 138. A helical; Anchor for type IV membrane protein membrane pass occupies residues 235–255; sequence LICAFAMAFIISVMLIAANQI. Topologically, residues 256–261 are extracellular; it reads LRSGME.

As to quaternary structure, interacts with PI4KB. This binding competes with FREQ/NCS1 binding in a calcium-dependent manner. Brain-specific. High expression in the cerebellum, hippocampus, and cortex.

The protein localises to the golgi apparatus. It is found in the trans-Golgi network membrane. Its subcellular location is the cytoplasm. It localises to the perinuclear region. The protein resides in the cell membrane. In terms of biological role, negatively regulates Golgi-to-plasma membrane trafficking by interacting with PI4KB and inhibiting its activity. May play a role in the physiology of neurons and is potentially important in memory and learning. The chain is Calcium-binding protein 8 (Caln1) from Mus musculus (Mouse).